A 337-amino-acid chain; its full sequence is Adenosine deaminase (337 aa).

2 residues coordinate Zn(2+): His12 and His14. Substrate contacts are provided by His14, Asp16, and Gly170. His197 serves as a coordination point for Zn(2+). The active-site Proton donor is the Glu200. Residue Asp278 coordinates Zn(2+). Position 279 (Asp279) interacts with substrate.

It belongs to the metallo-dependent hydrolases superfamily. Adenosine and AMP deaminases family. Adenosine deaminase subfamily. It depends on Zn(2+) as a cofactor.

It carries out the reaction adenosine + H2O + H(+) = inosine + NH4(+). The enzyme catalyses 2'-deoxyadenosine + H2O + H(+) = 2'-deoxyinosine + NH4(+). Its function is as follows. Catalyzes the hydrolytic deamination of adenosine and 2-deoxyadenosine. In Pectobacterium atrosepticum (strain SCRI 1043 / ATCC BAA-672) (Erwinia carotovora subsp. atroseptica), this protein is Adenosine deaminase.